A 491-amino-acid chain; its full sequence is Ketol-acid reductoisomerase (NADP(+)) (491 aa).

The KARI N-terminal Rossmann domain maps to 15 to 208 (AQLGKCRFMG…GGHRAGVLES (194 aa)). NADP(+) is bound by residues 45 to 48 (CGAQ), arginine 68, arginine 76, serine 78, and 108 to 110 (DKQ). Histidine 132 is a catalytic residue. Glycine 158 contributes to the NADP(+) binding site. 2 consecutive KARI C-terminal knotted domains span residues 209 to 344 (SFVA…TAPQ) and 345 to 484 (YEGK…MTDM). The Mg(2+) site is built by aspartate 217, glutamate 221, glutamate 389, and glutamate 393. Substrate is bound at residue serine 414.

This sequence belongs to the ketol-acid reductoisomerase family. Mg(2+) is required as a cofactor.

The enzyme catalyses (2R)-2,3-dihydroxy-3-methylbutanoate + NADP(+) = (2S)-2-acetolactate + NADPH + H(+). The catalysed reaction is (2R,3R)-2,3-dihydroxy-3-methylpentanoate + NADP(+) = (S)-2-ethyl-2-hydroxy-3-oxobutanoate + NADPH + H(+). It functions in the pathway amino-acid biosynthesis; L-isoleucine biosynthesis; L-isoleucine from 2-oxobutanoate: step 2/4. The protein operates within amino-acid biosynthesis; L-valine biosynthesis; L-valine from pyruvate: step 2/4. Its function is as follows. Involved in the biosynthesis of branched-chain amino acids (BCAA). Catalyzes an alkyl-migration followed by a ketol-acid reduction of (S)-2-acetolactate (S2AL) to yield (R)-2,3-dihydroxy-isovalerate. In the isomerase reaction, S2AL is rearranged via a Mg-dependent methyl migration to produce 3-hydroxy-3-methyl-2-ketobutyrate (HMKB). In the reductase reaction, this 2-ketoacid undergoes a metal-dependent reduction by NADPH to yield (R)-2,3-dihydroxy-isovalerate. The sequence is that of Ketol-acid reductoisomerase (NADP(+)) from Shigella dysenteriae serotype 1 (strain Sd197).